A 283-amino-acid chain; its full sequence is uncharacterized protein (283 aa).

Residues 172–270 (EAIRDYIDER…ERSPSEYRRQ (99 aa)) enclose the HTH araC/xylS-type domain. DNA-binding regions (H-T-H motif) lie at residues 189–210 (ESVA…QKTG) and 237–260 (VKEV…RKNT).

This is an uncharacterized protein from Escherichia coli (strain K12).